The chain runs to 248 residues: Ubiquinone/menaquinone biosynthesis C-methyltransferase UbiE (248 aa).

S-adenosyl-L-methionine contacts are provided by residues S68, D92, and 120 to 121 (NA).

It belongs to the class I-like SAM-binding methyltransferase superfamily. MenG/UbiE family.

The enzyme catalyses a 2-demethylmenaquinol + S-adenosyl-L-methionine = a menaquinol + S-adenosyl-L-homocysteine + H(+). It carries out the reaction a 2-methoxy-6-(all-trans-polyprenyl)benzene-1,4-diol + S-adenosyl-L-methionine = a 5-methoxy-2-methyl-3-(all-trans-polyprenyl)benzene-1,4-diol + S-adenosyl-L-homocysteine + H(+). It functions in the pathway quinol/quinone metabolism; menaquinone biosynthesis; menaquinol from 1,4-dihydroxy-2-naphthoate: step 2/2. Its pathway is cofactor biosynthesis; ubiquinone biosynthesis. In terms of biological role, methyltransferase required for the conversion of demethylmenaquinol (DMKH2) to menaquinol (MKH2) and the conversion of 2-polyprenyl-6-methoxy-1,4-benzoquinol (DDMQH2) to 2-polyprenyl-3-methyl-6-methoxy-1,4-benzoquinol (DMQH2). The sequence is that of Ubiquinone/menaquinone biosynthesis C-methyltransferase UbiE from Rickettsia typhi (strain ATCC VR-144 / Wilmington).